Consider the following 537-residue polypeptide: Pheophorbide a oxygenase, chloroplastic (537 aa).

The N-terminal 49 residues, 1–49 (MSVVLLSSTSATITKSQSKKIPFLSPTTKFPLKVSISPSRSKLFHNPLR), are a transit peptide targeting the chloroplast. Residues 51-77 (AAPPSVPTSDSTEEKRIEEEYGGDKEE) form a disordered region. The span at 62-77 (TEEKRIEEEYGGDKEE) shows a compositional bias: basic and acidic residues. One can recognise a Rieske domain in the interval 88 to 200 (WYPVSLVEDL…TMVSQGLLFV (113 aa)). [2Fe-2S] cluster contacts are provided by cysteine 130, histidine 132, cysteine 150, and histidine 153.

In terms of assembly, interacts with HCAR, SGR1, RCCR, PPH and the LHCII complex. Part of a SGR1-CCE-LHCII complex, which acts in chlorophyll breakdown.

It localises to the plastid. It is found in the chloroplast thylakoid membrane. The catalysed reaction is pheophorbide a + 2 reduced [2Fe-2S]-[ferredoxin] + O2 + 2 H(+) = red chlorophyll catabolite + 2 oxidized [2Fe-2S]-[ferredoxin]. It functions in the pathway porphyrin-containing compound metabolism; chlorophyll degradation. Might be regulated by a phosphorylation/dephosphorylation mechanism. Functionally, catalyzes the key reaction of chlorophyll catabolism, porphyrin macrocycle cleavage of pheophorbide a (pheide a) to a primary fluorescent catabolite (pFCC). Works in a two-step reaction with red chlorophyll catabolite reductase (RCCR). Creates the intermediate RCC through the opening of the porphyrin macrocycle by the introduction of one atom of molecular oxygen at the alpha-methine bridge. Seems to be specific for pheide a. Belongs to the chlorophyll catabolic enzymes (CCEs). The chain is Pheophorbide a oxygenase, chloroplastic (PAO) from Arabidopsis thaliana (Mouse-ear cress).